The sequence spans 934 residues: Desmocollin 2-like protein (934 aa).

4 consecutive Cadherin domains span residues 167-274 (RWRP…APEF), 274-381 (FTGN…PPTF), 382-494 (KEKL…GPEF), and 495-600 (NPNI…IPVI). The Extracellular segment spans residues 167-716 (RWRPLPFSVV…SASVSLGNYG (550 aa)). N-linked (GlcNAc...) asparagine glycosylation is found at Asn-197, Asn-296, and Asn-316. Asn-509, Asn-565, and Asn-569 each carry an N-linked (GlcNAc...) asparagine glycan. A helical membrane pass occupies residues 717-737 (ILALVLSGLLLLLLCLFLIFF). The Cytoplasmic portion of the chain corresponds to 738-934 (CTTKRDKLQI…ICYTTNKTGK (197 aa)).

Expressed at low levels in the brain and heart.

Its subcellular location is the cell junction. It is found in the desmosome. The protein localises to the cell membrane. Functionally, a component of desmosome cell-cell junctions which are required for positive regulation of cellular adhesion. Involved in the interaction of plaque proteins and intermediate filaments mediating cell-cell adhesion. Involved in the formation and structural organization of desmosome cell-cell junctions during embryonic development. Required for embryogenesis, specifically for progression of epiboly and normal convergence-extension movements during gastrulation. Required for the development of desmosomal-rich midlines in the heart. Plays an important role in ventricular contraction and resulting heart stroke volume. The protein is Desmocollin 2-like protein of Danio rerio (Zebrafish).